A 224-amino-acid chain; its full sequence is GTP cyclohydrolase 1 (224 aa).

Residues 1-20 (MKQEKTVSPTVENNRSAESR) form a disordered region. Residues C114, H117, and C185 each contribute to the Zn(2+) site.

The protein belongs to the GTP cyclohydrolase I family. As to quaternary structure, toroid-shaped homodecamer, composed of two pentamers of five dimers.

It catalyses the reaction GTP + H2O = 7,8-dihydroneopterin 3'-triphosphate + formate + H(+). It functions in the pathway cofactor biosynthesis; 7,8-dihydroneopterin triphosphate biosynthesis; 7,8-dihydroneopterin triphosphate from GTP: step 1/1. The sequence is that of GTP cyclohydrolase 1 from Chlorobaculum tepidum (strain ATCC 49652 / DSM 12025 / NBRC 103806 / TLS) (Chlorobium tepidum).